A 452-amino-acid chain; its full sequence is Pup--protein ligase (452 aa).

Residue E9 coordinates Mg(2+). R53 provides a ligand contact to ATP. Y55 contacts Mg(2+). D57 (proton acceptor) is an active-site residue. Residue E63 participates in Mg(2+) binding. ATP is bound by residues T66 and W419.

Belongs to the Pup ligase/Pup deamidase family. Pup-conjugating enzyme subfamily.

It catalyses the reaction ATP + [prokaryotic ubiquitin-like protein]-L-glutamate + [protein]-L-lysine = ADP + phosphate + N(6)-([prokaryotic ubiquitin-like protein]-gamma-L-glutamyl)-[protein]-L-lysine.. Its pathway is protein degradation; proteasomal Pup-dependent pathway. It participates in protein modification; protein pupylation. In terms of biological role, catalyzes the covalent attachment of the prokaryotic ubiquitin-like protein modifier Pup to the proteasomal substrate proteins, thereby targeting them for proteasomal degradation. This tagging system is termed pupylation. The ligation reaction involves the side-chain carboxylate of the C-terminal glutamate of Pup and the side-chain amino group of a substrate lysine. This Gordonia bronchialis (strain ATCC 25592 / DSM 43247 / BCRC 13721 / JCM 3198 / KCTC 3076 / NBRC 16047 / NCTC 10667) (Rhodococcus bronchialis) protein is Pup--protein ligase.